The chain runs to 259 residues: NAD kinase (259 aa).

Asp-49 functions as the Proton acceptor in the catalytic mechanism. Residues 49-50 (DG), Arg-54, 118-119 (NE), Asp-148, Ala-156, 159-164 (TAYNYS), and Ala-183 each bind NAD(+).

The protein belongs to the NAD kinase family. It depends on a divalent metal cation as a cofactor.

It localises to the cytoplasm. It carries out the reaction NAD(+) + ATP = ADP + NADP(+) + H(+). In terms of biological role, involved in the regulation of the intracellular balance of NAD and NADP, and is a key enzyme in the biosynthesis of NADP. Catalyzes specifically the phosphorylation on 2'-hydroxyl of the adenosine moiety of NAD to yield NADP. The sequence is that of NAD kinase from Xylella fastidiosa (strain 9a5c).